Reading from the N-terminus, the 469-residue chain is Glutamate--tRNA ligase 1 (469 aa).

The short motif at 10–20 is the 'HIGH' region element; sequence PSPTGYLHIGG. Zn(2+)-binding residues include C99, C101, C126, and D128. The short motif at 237–241 is the 'KMSKS' region element; the sequence is RLSKR. K240 provides a ligand contact to ATP.

It belongs to the class-I aminoacyl-tRNA synthetase family. Glutamate--tRNA ligase type 1 subfamily. Monomer. It depends on Zn(2+) as a cofactor.

The protein localises to the cytoplasm. The enzyme catalyses tRNA(Glu) + L-glutamate + ATP = L-glutamyl-tRNA(Glu) + AMP + diphosphate. Its function is as follows. Catalyzes the attachment of glutamate to tRNA(Glu) in a two-step reaction: glutamate is first activated by ATP to form Glu-AMP and then transferred to the acceptor end of tRNA(Glu). The protein is Glutamate--tRNA ligase 1 of Coxiella burnetii (strain CbuK_Q154) (Coxiella burnetii (strain Q154)).